The chain runs to 309 residues: Acetolactate synthase small subunit, mitochondrial (309 aa).

The N-terminal 24 residues, 1–24 (MLRSLLQSGHRRVVASSCATMVRC), are a transit peptide targeting the mitochondrion. One can recognise an ACT domain in the interval 79–159 (VLNCLVQNEP…DYTNSEIIKR (81 aa)).

This sequence belongs to the acetolactate synthase small subunit family. The acetolactate synthase complex contains the catalytic regulatory subunit ILV2 and the regulatory small subunit ILV6.

The protein resides in the mitochondrion. It functions in the pathway amino-acid biosynthesis; L-isoleucine biosynthesis; L-isoleucine from 2-oxobutanoate: step 1/4. The protein operates within amino-acid biosynthesis; L-valine biosynthesis; L-valine from pyruvate: step 1/4. Functionally, regulatory subunit of mitochondrial acetolactate synthase, which catalyzes the first of a series of common steps in the biosynthesis of the branched-chain amino acids. Stimulates activity of the acetolactate synthase catalytic subunit ILV2 seven- to tenfold and confers sensitivity to inhibition by valine and activation by ATP. This chain is Acetolactate synthase small subunit, mitochondrial (ILV6), found in Saccharomyces cerevisiae (strain ATCC 204508 / S288c) (Baker's yeast).